The sequence spans 156 residues: ATP synthase subunit b', organellar chromatophore (156 aa).

The helical transmembrane segment at 23–43 threads the bilayer; the sequence is TLPLMAIQVVFLTFILNAIFF.

The protein belongs to the ATPase B chain family. As to quaternary structure, F-type ATPases have 2 components, F(1) - the catalytic core - and F(0) - the membrane proton channel. F(1) has five subunits: alpha(3), beta(3), gamma(1), delta(1), epsilon(1). F(0) has four main subunits: a(1), b(1), b'(1) and c(10-14). The alpha and beta chains form an alternating ring which encloses part of the gamma chain. F(1) is attached to F(0) by a central stalk formed by the gamma and epsilon chains, while a peripheral stalk is formed by the delta, b and b' chains.

It localises to the plastid. It is found in the organellar chromatophore thylakoid membrane. Functionally, f(1)F(0) ATP synthase produces ATP from ADP in the presence of a proton or sodium gradient. F-type ATPases consist of two structural domains, F(1) containing the extramembraneous catalytic core and F(0) containing the membrane proton channel, linked together by a central stalk and a peripheral stalk. During catalysis, ATP synthesis in the catalytic domain of F(1) is coupled via a rotary mechanism of the central stalk subunits to proton translocation. Component of the F(0) channel, it forms part of the peripheral stalk, linking F(1) to F(0). The b'-subunit is a diverged and duplicated form of b found in plants and photosynthetic bacteria. This is ATP synthase subunit b', organellar chromatophore from Paulinella chromatophora.